The sequence spans 954 residues: MTELLQSLNTQHEFVGRHNGPNHADQQKMLSTINAESLDALIAQTVPAQIRLEKPMQLAEAQSEADMLASIKKFADLNQVKRTFIGQGYYNTFTPNVILRNVLENPGWYTAYTPYQPEISQGRLESLLNYQQMVMDLTGMDIANASLLDEATAAAEAMTLCQRAGKSKSKVFFVADDVHPQTIEVIKTRAKYFGFDVVIGNVDALPQTEAFGALLQYPSTTGEVRDLTDVIAQAQANKTLVSVATDLLASALVKPAGEMGADVVIGSAQRFGVPMGYGGPHAAFMATREQHKRTMPGRVIGVSIDAKGNQALRMAMQTREQHIRREKATSNICTAQALLANMASFFAVYHGEEGIRTIARRTHHMTAILAAGLTKSGYELAHNAFFDTITINTGDKTQALYAKAQAADINLRLLDGQIGISFDETTTVADIDALFAIFDVKESVNALSTDIAGNEFAAIPEACRRTSRFLSHPVFNTHHSETQMMRYLKQLENKDFSLTHGMIPLGSCTMKLNAAAEMIPVTWPEFGALHPFAPIEQAAGYTALAEDLKAKLCEITGYDAFSLQPNSGASGEYAGLIAIQRYHESRGEGHRNVCLIPSSAHGTNPATAAMVSMKVVVVKCDENGNIDLVDLAAKIEKHQENLSSIMITYPSTHGVYEEQVKEVCEMVHAAGGQVYLDGANMNAQVGLTSPGFIGSDVSHLNLHKTFCIPHGGGGPGMGPIGVKSHLAPFLPGHIENGVEGKEFAVSAADLGSASILPISWAYIAMMGADGLTEATKVAILNANYVMERLRPHYPVLYRGTNGRVAHECIIDIRPLKEETGISEEDIAKRLMDYGFHAPTMSFPVAGTLMVEPTESEDLEELDRFCDAMIAIREEMTKVKNGEWPLENNPLVNAPHTQVDLMEEQWDRPYPREIACFPSAATKRSKYWPTVNRVDNVYGDRNLVCSCPGIENYEE.

Lys704 is subject to N6-(pyridoxal phosphate)lysine.

It belongs to the GcvP family. In terms of assembly, the glycine cleavage system is composed of four proteins: P, T, L and H. It depends on pyridoxal 5'-phosphate as a cofactor.

The enzyme catalyses N(6)-[(R)-lipoyl]-L-lysyl-[glycine-cleavage complex H protein] + glycine + H(+) = N(6)-[(R)-S(8)-aminomethyldihydrolipoyl]-L-lysyl-[glycine-cleavage complex H protein] + CO2. Functionally, the glycine cleavage system catalyzes the degradation of glycine. The P protein binds the alpha-amino group of glycine through its pyridoxal phosphate cofactor; CO(2) is released and the remaining methylamine moiety is then transferred to the lipoamide cofactor of the H protein. The protein is Glycine dehydrogenase (decarboxylating) of Vibrio vulnificus (strain YJ016).